The sequence spans 441 residues: MAQLCDTIIHAHCIVTQNKERVILYNGSLAITSGNIVALGPKEEICSFWDAKETLDLCNMLVMPGLINAHTHVAMTFFRGLADDLPLMEWLKSYIFPIERHLTPETVRWSSLLGYAEMLRTGTTACLDMYFFEDVVFEAAIKAGIRCTGGESIFVFPSVSCDTAKTALEHTKKMAELYSDNTRINVVVNPHSVYTTTPQVLSQCIEVAEECSLPLHIHLSETTTETQICLQKYGLRPVSYCRDLGILTPRTTLAHVVDVNLEELTCLAEHGCVISHNPSSNMKLASGVSPIPEMIKRNLSVGLGTDGAASNNCLNMFMEMGRCALLHKVYWNNPTALFAQTVLDMATLGGAAAIHQPKLGVLAPGHPADLIALDMSMPNLQPMFNPISHLIYATTGMEVFLTMVEGEILYYNGTFTRFDYDSLSNEMKKVSHWVKEKLQLL.

Zn(2+)-binding residues include histidine 70 and histidine 72. Residues glutamate 99 and histidine 191 each contribute to the substrate site. Histidine 218 contributes to the Zn(2+) binding site. Glutamate 221 and aspartate 306 together coordinate substrate. Aspartate 306 lines the Zn(2+) pocket.

The protein belongs to the metallo-dependent hydrolases superfamily. MTA/SAH deaminase family. Requires Zn(2+) as cofactor.

The enzyme catalyses S-adenosyl-L-homocysteine + H2O + H(+) = S-inosyl-L-homocysteine + NH4(+). It carries out the reaction S-methyl-5'-thioadenosine + H2O + H(+) = S-methyl-5'-thioinosine + NH4(+). Functionally, catalyzes the deamination of 5-methylthioadenosine and S-adenosyl-L-homocysteine into 5-methylthioinosine and S-inosyl-L-homocysteine, respectively. Is also able to deaminate adenosine. The polypeptide is 5-methylthioadenosine/S-adenosylhomocysteine deaminase (Lawsonia intracellularis (strain PHE/MN1-00)).